The primary structure comprises 252 residues: Short-chain dehydrogenase anuI (252 aa).

6 residues coordinate NADP(+): Leu-18, Asp-65, Asn-92, Tyr-171, Lys-175, and Thr-206. Tyr-171 (proton acceptor) is an active-site residue. Residue Tyr-171 is the Proton donor of the active site. Residue Lys-175 is the Lowers pKa of active site Tyr of the active site.

This sequence belongs to the short-chain dehydrogenases/reductases (SDR) family.

Highly reducing polyketide synthase; part of the gene cluster that mediates the biosynthesis of annullatin D, an alkylated aromatic polyketide with a fused dihydrobenzofuran lactone ring system that exhibits potent agonistic activities toward the cannabinoid receptors. AnuI does not seem to play a role within the pathway. The annullatin backbone 2-hydroxymethyl-3-pentylphenol is assembled from one acetyl-CoA starter unit and 5 malonyl-CoA elongation units by cooperation of the highly reducing polyketide synthase anuA, the short-chain dehydrogenase anuB and the oxidoreductase anuC, before being hydroxylated at the C-5 alkyl chain by the cytochrome P450 monooxygenase anuE to form (8S)-annullatin E. The prenyltransferase anuH subsequently installs one isoprenyl group at the benzene ring to form (8S)-annullatin J. Enzymatic or nonenzymatic dihydro-benzofuran ring formation between the prenyl and the phenolic hydroxyl groups in (8S)-annullatin J results in two diastereomers (2S,9S)-annullatin H and compound 12. The intermediate (2S,9S)-annullatin H is then converted to (2S,9S)-annullatin D by the FAD-linked oxidoreductase anuG-catalyzed five-member lactone ring formation. The isomer 12 acts as a substrate for the short-chain dehydrogenase anuF and is oxidized to (2R)-annullatin F, which is subsequently acetylated by an acetyltransferase leading to (2R)-annullatin G formation. The remaining enzymes identified within the cluster, anuD, anuI and anuJ, seem not to be involved in annullatin biosynthesis. This Penicillium roqueforti (strain FM164) protein is Short-chain dehydrogenase anuI.